The primary structure comprises 212 residues: Ribosomal RNA small subunit methyltransferase G (212 aa).

Residues Gly-80, Leu-85, 131 to 132 (AE), and Arg-146 contribute to the S-adenosyl-L-methionine site.

It belongs to the methyltransferase superfamily. RNA methyltransferase RsmG family.

The protein resides in the cytoplasm. The enzyme catalyses guanosine(527) in 16S rRNA + S-adenosyl-L-methionine = N(7)-methylguanosine(527) in 16S rRNA + S-adenosyl-L-homocysteine. Its function is as follows. Specifically methylates the N7 position of guanine in position 527 of 16S rRNA. The chain is Ribosomal RNA small subunit methyltransferase G from Xanthomonas axonopodis pv. citri (strain 306).